A 174-amino-acid chain; its full sequence is Repair DNA polymerase X (174 aa).

Positions 42–51 (REEKMLNDVD) are involved in ssDNA binding. Asp-49 and Asp-51 together coordinate Mg(2+). Residues Cys-81 and Cys-86 are joined by a disulfide bond. Asp-100 contributes to the Mg(2+) binding site.

It belongs to the DNA polymerase type-X family. Mg(2+) is required as a cofactor.

The protein localises to the virion. The enzyme catalyses DNA(n) + a 2'-deoxyribonucleoside 5'-triphosphate = DNA(n+1) + diphosphate. In terms of biological role, error-prone polymerase lacking a proofreading 3'-5' exonuclease which catalyzes the gap-filling reaction during the DNA repair process. Specifically binds intermediates in the single-nucleotide base-excision repair process. Also catalyzes DNA polymerization with low nucleotide-insertion fidelity. Probably acts as a strategic DNA mutase, which gives rise to a rapid emergence of variants. Generates mismatched G-G pairs, in that case, the polymerase first binds the deoxynucleotide followed by mismatch formation. Together with the viral DNA ligase, fills the single nucleotide gaps generated by the AP endonuclease. Binds DNA with high affinity via the helix alphaE. The chain is Repair DNA polymerase X from Ornithodoros (relapsing fever ticks).